Reading from the N-terminus, the 120-residue chain is NADH-ubiquinone oxidoreductase chain 3 (120 aa).

A run of 3 helical transmembrane segments spans residues phenylalanine 7 to leucine 27, phenylalanine 62 to phenylalanine 82, and methionine 89 to isoleucine 109.

Belongs to the complex I subunit 3 family.

It localises to the mitochondrion membrane. The catalysed reaction is a ubiquinone + NADH + 5 H(+)(in) = a ubiquinol + NAD(+) + 4 H(+)(out). Functionally, core subunit of the mitochondrial membrane respiratory chain NADH dehydrogenase (Complex I) that is believed to belong to the minimal assembly required for catalysis. Complex I functions in the transfer of electrons from NADH to the respiratory chain. The immediate electron acceptor for the enzyme is believed to be ubiquinone. In Dictyostelium discoideum (Social amoeba), this protein is NADH-ubiquinone oxidoreductase chain 3 (nad3).